Reading from the N-terminus, the 482-residue chain is Retinoic acid receptor beta (482 aa).

Residues 1–114 are modulating; the sequence is MSTSSHACPV…PLPPPRVYKP (114 aa). A Phosphoserine modification is found at serine 104. 2 NR C4-type zinc fingers span residues 115 to 135 and 151 to 175; these read CFVC…CEGC and CHRD…LQKC. Positions 115-180 form a DNA-binding region, nuclear receptor; the sequence is CFVCQDKSSG…RLQKCFEVGM (66 aa). The tract at residues 181-209 is hinge; sequence SKESVRNDRNKKKKEPSKQECTESYEMTA. The 235-residue stretch at 210–444 folds into the NR LBD domain; the sequence is ELDDLTEKIR…PLIQEMLENS (235 aa). The interval 443–482 is disordered; that stretch reads NSEGHEPLTPSSSGNIAEHSPSVSPSSVENSGVSQSPLLQ. The span at 462-482 shows a compositional bias: low complexity; it reads SPSVSPSSVENSGVSQSPLLQ.

It belongs to the nuclear hormone receptor family. NR1 subfamily. Homodimer. Heterodimer; with a RXR molecule. Binds DNA preferentially as a RAR/RXR heterodimer. Heterodimerizes (via NR LBD) with RXRA. Interacts weakly with NCOR2.

It is found in the nucleus. The protein resides in the cytoplasm. Receptor for retinoic acid. Retinoic acid receptors bind as heterodimers to their target response elements in response to their ligands, all-trans or 9-cis retinoic acid, and regulate gene expression in various biological processes. The RAR/RXR heterodimers bind to the retinoic acid response elements (RARE) composed of tandem 5'-AGGTCA-3' sites known as DR1-DR5. In the absence of ligand, acts mainly as an activator of gene expression due to weak binding to corepressors. The RXRA/RARB heterodimer can act as a repressor on the DR1 element and as an activator on the DR5 element. In concert with RARG, required for skeletal growth, matrix homeostasis and growth plate function. The sequence is that of Retinoic acid receptor beta (Rarb) from Mus musculus (Mouse).